Reading from the N-terminus, the 691-residue chain is DNA ligase (691 aa).

Residues 41 to 45 (DAEYD), 90 to 91 (SL), and glutamate 130 each bind NAD(+). The active-site N6-AMP-lysine intermediate is lysine 132. 4 residues coordinate NAD(+): arginine 153, glutamate 190, lysine 307, and lysine 331. Zn(2+) is bound by residues cysteine 425, cysteine 428, cysteine 443, and cysteine 449. Positions 610–691 (APQGVLAGKT…MHTLLEGHAR (82 aa)) constitute a BRCT domain.

The protein belongs to the NAD-dependent DNA ligase family. LigA subfamily. Requires Mg(2+) as cofactor. Mn(2+) serves as cofactor.

It catalyses the reaction NAD(+) + (deoxyribonucleotide)n-3'-hydroxyl + 5'-phospho-(deoxyribonucleotide)m = (deoxyribonucleotide)n+m + AMP + beta-nicotinamide D-nucleotide.. DNA ligase that catalyzes the formation of phosphodiester linkages between 5'-phosphoryl and 3'-hydroxyl groups in double-stranded DNA using NAD as a coenzyme and as the energy source for the reaction. It is essential for DNA replication and repair of damaged DNA. The chain is DNA ligase from Burkholderia mallei (strain NCTC 10247).